A 173-amino-acid polypeptide reads, in one-letter code: uncharacterized protein (173 aa).

It belongs to the ycf73 family.

The protein resides in the plastid. It is found in the chloroplast. This is an uncharacterized protein from Saccharum hybrid (Sugarcane).